The chain runs to 24 residues: uncharacterized protein (24 aa).

The Cytoplasmic portion of the chain corresponds to 1–3 (MKK). A helical membrane pass occupies residues 4–24 (TTIIMMGVAIIVVLGTELGWW).

The protein resides in the cell inner membrane. This is an uncharacterized protein from Escherichia coli (strain K12).